The primary structure comprises 559 residues: NAD-dependent malic enzyme 2 (559 aa).

The active-site Proton donor is Tyr98. Arg151 serves as a coordination point for NAD(+). Residue Lys169 is the Proton acceptor of the active site. Positions 240, 241, and 264 each coordinate a divalent metal cation. NAD(+) is bound by residues Asp264 and Asn413.

Belongs to the malic enzymes family. As to quaternary structure, homotetramer. Mg(2+) serves as cofactor. Mn(2+) is required as a cofactor.

It catalyses the reaction (S)-malate + NAD(+) = pyruvate + CO2 + NADH. It carries out the reaction oxaloacetate + H(+) = pyruvate + CO2. The chain is NAD-dependent malic enzyme 2 from Vibrio vulnificus (strain YJ016).